The primary structure comprises 400 residues: Arabinan endo-1,5-alpha-L-arabinosidase B (400 aa).

The N-terminal stretch at 1–16 (MAVIFVLFFLVSMALS) is a signal peptide. N-linked (GlcNAc...) asparagine glycosylation occurs at Asn24. The Proton acceptor role is filled by Asp70. Asn184 carries N-linked (GlcNAc...) asparagine glycosylation. Glu277 serves as the catalytic Proton donor. Asn372 carries an N-linked (GlcNAc...) asparagine glycan.

This sequence belongs to the glycosyl hydrolase 43 family.

Its subcellular location is the secreted. The catalysed reaction is Endohydrolysis of (1-&gt;5)-alpha-arabinofuranosidic linkages in (1-&gt;5)-arabinans.. Its pathway is glycan metabolism; L-arabinan degradation. In terms of biological role, endo-1,5-alpha-L-arabinanase involved in degradation of pectin. Its preferred substrate is linear 1,5-alpha-L-arabinan. The sequence is that of Arabinan endo-1,5-alpha-L-arabinosidase B (abnB) from Emericella nidulans (strain FGSC A4 / ATCC 38163 / CBS 112.46 / NRRL 194 / M139) (Aspergillus nidulans).